We begin with the raw amino-acid sequence, 453 residues long: Probable exopolygalacturonase B (453 aa).

Positions 1-16 (MKFFALAALFASTVNS) are cleaved as a signal peptide. Residues Asn185 and Asn225 are each glycosylated (N-linked (GlcNAc...) asparagine). Asp255 acts as the Proton donor in catalysis. Cys257 and Cys274 are joined by a disulfide. Asn263 and Asn275 each carry an N-linked (GlcNAc...) asparagine glycan. The active site involves His278. PbH1 repeat units lie at residues 295–316 (IENV…RLKA) and 327–348 (INNV…VLDQ). N-linked (GlcNAc...) asparagine glycosylation is found at Asn302, Asn329, Asn354, and Asn366. Residues 362–405 (PSRVNFTNIVFEDIYGTSSGKRGKVVADLTCSPNAVCSGIRLKN) form a PbH1 3 repeat. Cys392 and Cys398 are joined by a disulfide. Residue Asn436 is glycosylated (N-linked (GlcNAc...) asparagine).

It belongs to the glycosyl hydrolase 28 family.

Its subcellular location is the secreted. The enzyme catalyses [(1-&gt;4)-alpha-D-galacturonosyl](n) + H2O = alpha-D-galacturonate + [(1-&gt;4)-alpha-D-galacturonosyl](n-1). Functionally, specific in hydrolyzing the terminal glycosidic bond of polygalacturonic acid and oligogalacturonates. In Aspergillus fumigatus (strain ATCC MYA-4609 / CBS 101355 / FGSC A1100 / Af293) (Neosartorya fumigata), this protein is Probable exopolygalacturonase B (pgxB).